The following is a 211-amino-acid chain: Acyl-homoserine-lactone synthase (211 aa).

It belongs to the autoinducer synthase family.

It catalyses the reaction a fatty acyl-[ACP] + S-adenosyl-L-methionine = an N-acyl-L-homoserine lactone + S-methyl-5'-thioadenosine + holo-[ACP] + H(+). In terms of biological role, required for the synthesis of OHHL (N-(3-oxohexanoyl)-L-homoserine lactone), an autoinducer molecule which binds to TraR and thus acts in the control of conjugal transfer. This chain is Acyl-homoserine-lactone synthase (traI), found in Agrobacterium fabrum (strain C58 / ATCC 33970) (Agrobacterium tumefaciens (strain C58)).